The sequence spans 479 residues: NAC domain-containing protein 45 (479 aa).

The NAC domain maps to 6-157 (LPPGFRFHPT…AYALCRVFKK (152 aa)). The DNA-binding element occupies 105-163 (IGTKKTLVYYRGRAPHGIRTGWVMHEYRLDETECEPSAYGMQDAYALCRVFKKIVIEAK).

As to expression, expressed in a few sieve element cells before enucleation and in phloem-pole pericycle cells.

The protein localises to the nucleus. Functionally, transcription factor directing sieve element enucleation and cytosol degradation. Not required for formation of lytic vacuoles. Regulates, with NAC086, the transcription of NEN1, NEN2, NEN3, NEN4, RTM1, RTM2, UBP16, PLDZETA, ABCB10 and At1g26450. The protein is NAC domain-containing protein 45 of Arabidopsis thaliana (Mouse-ear cress).